Consider the following 326-residue polypeptide: Ribosomal large subunit pseudouridine synthase D (326 aa).

The S4 RNA-binding domain maps to 18–91 (QRLDQALAEM…IPLDIVYEDE (74 aa)). The active site involves aspartate 139.

Belongs to the pseudouridine synthase RluA family. In terms of assembly, in late stage pre-50S ribosomal subunit interacts with ObgE and DarP(YjgA).

The protein localises to the cytoplasm. It carries out the reaction uridine(1911/1915/1917) in 23S rRNA = pseudouridine(1911/1915/1917) in 23S rRNA. In terms of biological role, responsible for synthesis of pseudouridine from uracil at positions 1911, 1915 and 1917 in 23S ribosomal RNA. Other positions are not modified. Uridine isomerization occurs as a late step during the assembly of the large ribosomal subunit. Member of a network of 50S ribosomal subunit biogenesis factors (ObgE, RluD, RsfS and DarP(YjgA)) which assembles along the 30S-50S interface, allowing 23S rRNA modification and preventing incorrect 23S rRNA structures from forming. In Escherichia coli (strain K12), this protein is Ribosomal large subunit pseudouridine synthase D.